The sequence spans 122 residues: MIQPQTHLNVADNSGARKLMCIRILGASNRRYAYIGDIVVAVIKQAVPNTNLERSEVIRAVIVRTCKQLKRSNGIIIQYDDNAAVVIDQEGNPKGTRIFCAIARELRQLNFTKIVSLAPEVL.

The protein belongs to the universal ribosomal protein uL14 family. Part of the 50S ribosomal subunit.

The protein resides in the plastid. It localises to the chloroplast. Its function is as follows. Binds to 23S rRNA. This chain is Large ribosomal subunit protein uL14c, found in Phaseolus vulgaris (Kidney bean).